We begin with the raw amino-acid sequence, 561 residues long: Sesquiterpene synthase TPS2 (561 aa).

The segment at 6–26 (ANGHSDVPSTQPPIGKQKKEI) is disordered. 5 residues coordinate (2E,6E)-farnesyl diphosphate: R277, D314, D318, R455, and D458. Mg(2+) contacts are provided by D314 and D318. Residues 314–318 (DDTYD) carry the DDXXD motif motif. 3 residues coordinate Mg(2+): D458, S462, and E466.

Belongs to the terpene synthase family. Tpsa subfamily. Monomer. Requires Mg(2+) as cofactor.

Its subcellular location is the cytoplasm. It carries out the reaction (2E,6E)-farnesyl diphosphate = beta-ylangene + diphosphate. The catalysed reaction is (2E,6E)-farnesyl diphosphate = beta-copaene + diphosphate. The enzyme catalyses (2E,6E)-farnesyl diphosphate = beta-cubebene + diphosphate. It participates in secondary metabolite biosynthesis; terpenoid biosynthesis. Sesquiterpene synthase involved in the biosynthesis of volatile organic compounds. Mediates the conversion of (2E,6E)-farnesyl diphosphate (FPP) into beta-ylangene, beta-copaene and beta-cubebene. Does not use (2E)-geranyl diphosphate (GPP) as substrate. The protein is Sesquiterpene synthase TPS2 of Cananga odorata (Ylang-ylang tree).